Reading from the N-terminus, the 137-residue chain is NADPH-dependent 7-cyano-7-deazaguanine reductase (137 aa).

The active-site Thioimide intermediate is the Cys50. Asp57 acts as the Proton donor in catalysis. Residues 72–74 (VEL) and 91–92 (HE) contribute to the substrate site.

It belongs to the GTP cyclohydrolase I family. QueF type 1 subfamily.

It is found in the cytoplasm. It catalyses the reaction 7-aminomethyl-7-carbaguanine + 2 NADP(+) = 7-cyano-7-deazaguanine + 2 NADPH + 3 H(+). The protein operates within tRNA modification; tRNA-queuosine biosynthesis. Catalyzes the NADPH-dependent reduction of 7-cyano-7-deazaguanine (preQ0) to 7-aminomethyl-7-deazaguanine (preQ1). The chain is NADPH-dependent 7-cyano-7-deazaguanine reductase from Synechococcus sp. (strain CC9902).